The chain runs to 680 residues: Lipase 1 (680 aa).

A signal peptide spans 1-34; the sequence is MKSQNKYSIRKFSVGASSILIATLLFLSGGQAQA. A propeptide spanning residues 35–290 is cleaved from the precursor; it reads AEKQVNMGNS…AKAKDDQTNK (256 aa). Residues 82-259 form a disordered region; it reads KNLHNDKTIS…PTKDNDKKNG (178 aa). The segment covering 84–112 has biased composition (basic and acidic residues); it reads LHNDKTISEENHRKTDDLNKDQLKDDKKS. Over residues 125–138 the composition is skewed to polar residues; that stretch reads KNNNANPSDVNQGL. Low complexity predominate over residues 148 to 170; sequence SKVASQQQSKEADNSQDSNANNN. Residues 204–223 are compositionally biased toward polar residues; sequence QPQQNNQANDKITNYNFNNE. The span at 224 to 234 shows a compositional bias: basic and acidic residues; sequence QEVKPQKDEKT. The span at 235 to 246 shows a compositional bias: polar residues; sequence LSVSDLKNNQKS. Catalysis depends on serine 408, which acts as the Nucleophile. Aspartate 600 serves as the catalytic Charge relay system. Position 638 (aspartate 638) interacts with Ca(2+). Histidine 639 serves as the catalytic Charge relay system. Aspartate 641, aspartate 646, and aspartate 649 together coordinate Ca(2+).

It belongs to the AB hydrolase superfamily. Lipase family.

The protein localises to the secreted. It catalyses the reaction a triacylglycerol + H2O = a diacylglycerol + a fatty acid + H(+). This Staphylococcus aureus (strain MSSA476) protein is Lipase 1 (lip1).